Consider the following 170-residue polypeptide: Probable inosine/xanthosine triphosphatase (170 aa).

Glutamate 31 is a Mg(2+) binding site.

Belongs to the YjjX NTPase family. Homodimer. Requires Mg(2+) as cofactor. The cofactor is Mn(2+).

The catalysed reaction is XTP + H2O = XDP + phosphate + H(+). The enzyme catalyses ITP + H2O = IDP + phosphate + H(+). Its function is as follows. Phosphatase that hydrolyzes non-canonical purine nucleotides such as XTP and ITP to their respective diphosphate derivatives. Probably excludes non-canonical purines from DNA/RNA precursor pool, thus preventing their incorporation into DNA/RNA and avoiding chromosomal lesions. The chain is Probable inosine/xanthosine triphosphatase from Oceanobacillus iheyensis (strain DSM 14371 / CIP 107618 / JCM 11309 / KCTC 3954 / HTE831).